The following is a 626-amino-acid chain: Chaperone protein HtpG (626 aa).

Residues 1–341 form an a; substrate-binding region; sequence METKQFKAES…SEDLSLNISR (341 aa). The interval 342-552 is b; the sequence is EILQHDRQLK…EGELSIEMEK (211 aa). The segment at 553–626 is c; that stretch reads VLNAMPNNQN…FTNNICKIMK (74 aa).

It belongs to the heat shock protein 90 family. In terms of assembly, homodimer.

The protein resides in the cytoplasm. Functionally, molecular chaperone. Has ATPase activity. The sequence is that of Chaperone protein HtpG from Clostridium botulinum (strain 657 / Type Ba4).